The chain runs to 393 residues: Beta-1,4-galactosyltransferase 3 (393 aa).

At 1 to 10 (MLRRLLERPC) the chain is on the cytoplasmic side. A helical; Signal-anchor for type II membrane protein membrane pass occupies residues 11-31 (TLALLVGSQLAVMMYLSLGGF). Residues 32-393 (RSLSALFGRD…ANHTALRGSH (362 aa)) are Lumenal-facing. Asn57 carries an N-linked (GlcNAc...) asparagine glycan. An intrachain disulfide couples Cys77 to Cys119. UDP-alpha-D-galactose is bound at residue 130–134 (PHRAR). Asn166 carries an N-linked (GlcNAc...) asparagine glycan. UDP-alpha-D-galactose-binding positions include 169-171 (FNR), 196-197 (VD), Tyr226, and Trp258. A disulfide bond links Cys190 and Cys209. Asp197 contacts Mn(2+). An N-acetyl-D-glucosamine-binding site is contributed by 260–263 (GEDD). Position 291 (His291) interacts with Mn(2+). Residue 291 to 293 (HRG) participates in UDP-alpha-D-galactose binding. Arg303 is a binding site for N-acetyl-D-glucosamine. N-linked (GlcNAc...) asparagine glycosylation is found at Asn337 and Asn385. Residues 339-393 (TADIGTDPRGPRAPSGPRYPPGSSQAFRQEMLQRRPPARPGPPPTANHTALRGSH) are disordered.

This sequence belongs to the glycosyltransferase 7 family. The cofactor is Mn(2+).

The protein resides in the golgi apparatus. It localises to the golgi stack membrane. It carries out the reaction an N-acetyl-beta-D-glucosaminyl derivative + UDP-alpha-D-galactose = a beta-D-galactosyl-(1-&gt;4)-N-acetyl-beta-D-glucosaminyl derivative + UDP + H(+). The catalysed reaction is N-acetyl-D-glucosamine + UDP-alpha-D-galactose = beta-D-galactosyl-(1-&gt;4)-N-acetyl-D-glucosamine + UDP + H(+). It catalyses the reaction a beta-D-GlcNAc-(1-&gt;3)-beta-D-Gal-(1-&gt;4)-beta-D-Glc-(1&lt;-&gt;1)-Cer(d18:1(4E)) + UDP-alpha-D-galactose = a neolactoside nLc4Cer(d18:1(4E)) + UDP + H(+). The enzyme catalyses a beta-D-glucosylceramide + UDP-alpha-D-galactose = a beta-D-galactosyl-(1-&gt;4)-beta-D-glucosyl-(1&lt;-&gt;1)-ceramide + UDP + H(+). It carries out the reaction a neolactoside IV(3)-beta-GlcNAc-nLc4Cer + UDP-alpha-D-galactose = a neolactoside nLc6Cer + UDP + H(+). The protein operates within protein modification; protein glycosylation. In terms of biological role, responsible for the synthesis of complex-type N-linked oligosaccharides in many glycoproteins as well as the carbohydrate moieties of glycolipids. The sequence is that of Beta-1,4-galactosyltransferase 3 (B4GALT3) from Pongo abelii (Sumatran orangutan).